Consider the following 198-residue polypeptide: Transcription factor FapR (198 aa).

Residues asparagine 102–valine 169 enclose the MaoC-like domain.

It belongs to the FapR family.

Functionally, transcriptional factor involved in regulation of membrane lipid biosynthesis by repressing genes involved in fatty acid and phospholipid metabolism. The sequence is that of Transcription factor FapR from Geobacillus sp. (strain WCH70).